We begin with the raw amino-acid sequence, 58 residues long: Small ribosomal subunit protein bS21 (58 aa).

The disordered stretch occupies residues Asp-39–Arg-58. Positions Val-43 to Arg-58 are enriched in basic residues.

The protein belongs to the bacterial ribosomal protein bS21 family.

The sequence is that of Small ribosomal subunit protein bS21 (rpsU) from Chlamydia pneumoniae (Chlamydophila pneumoniae).